Here is a 481-residue protein sequence, read N- to C-terminus: NADH-quinone oxidoreductase subunit N (481 aa).

The next 13 membrane-spanning stretches (helical) occupy residues 14–34, 38–57, 76–96, 108–128, 162–182, 204–224, 235–255, 272–292, 297–317, 323–343, 369–389, 403–423, and 449–469; these read LILS…GDGF, IGWG…TGPA, FAKL…PGFF, PVLI…GDLL, FVLG…LYGF, MFGM…VPFH, PTPV…ALLL, IVVF…IGQT, LLAY…AAGS, ATMT…ICVL, LAAA…LFGF, GFWP…FYYL, and GLIT…IPLL.

It belongs to the complex I subunit 2 family. NDH-1 is composed of 14 different subunits. Subunits NuoA, H, J, K, L, M, N constitute the membrane sector of the complex.

The protein resides in the cell inner membrane. It carries out the reaction a quinone + NADH + 5 H(+)(in) = a quinol + NAD(+) + 4 H(+)(out). NDH-1 shuttles electrons from NADH, via FMN and iron-sulfur (Fe-S) centers, to quinones in the respiratory chain. The immediate electron acceptor for the enzyme in this species is believed to be ubiquinone. Couples the redox reaction to proton translocation (for every two electrons transferred, four hydrogen ions are translocated across the cytoplasmic membrane), and thus conserves the redox energy in a proton gradient. The polypeptide is NADH-quinone oxidoreductase subunit N (Rhizorhabdus wittichii (strain DSM 6014 / CCUG 31198 / JCM 15750 / NBRC 105917 / EY 4224 / RW1) (Sphingomonas wittichii)).